The primary structure comprises 185 residues: Ribosome-recycling factor (185 aa).

The protein belongs to the RRF family.

The protein resides in the cytoplasm. Functionally, responsible for the release of ribosomes from messenger RNA at the termination of protein biosynthesis. May increase the efficiency of translation by recycling ribosomes from one round of translation to another. In Pseudomonas putida (strain GB-1), this protein is Ribosome-recycling factor.